We begin with the raw amino-acid sequence, 37 residues long: Large ribosomal subunit protein bL36 (37 aa).

It belongs to the bacterial ribosomal protein bL36 family.

The chain is Large ribosomal subunit protein bL36 from Caldicellulosiruptor saccharolyticus (strain ATCC 43494 / DSM 8903 / Tp8T 6331).